The sequence spans 150 residues: SsrA-binding protein (150 aa).

Residues 130-150 (DKRESLKEKDDRREMDRMFKR) are disordered.

This sequence belongs to the SmpB family.

Its subcellular location is the cytoplasm. Required for rescue of stalled ribosomes mediated by trans-translation. Binds to transfer-messenger RNA (tmRNA), required for stable association of tmRNA with ribosomes. tmRNA and SmpB together mimic tRNA shape, replacing the anticodon stem-loop with SmpB. tmRNA is encoded by the ssrA gene; the 2 termini fold to resemble tRNA(Ala) and it encodes a 'tag peptide', a short internal open reading frame. During trans-translation Ala-aminoacylated tmRNA acts like a tRNA, entering the A-site of stalled ribosomes, displacing the stalled mRNA. The ribosome then switches to translate the ORF on the tmRNA; the nascent peptide is terminated with the 'tag peptide' encoded by the tmRNA and targeted for degradation. The ribosome is freed to recommence translation, which seems to be the essential function of trans-translation. This is SsrA-binding protein from Phocaeicola vulgatus (strain ATCC 8482 / DSM 1447 / JCM 5826 / CCUG 4940 / NBRC 14291 / NCTC 11154) (Bacteroides vulgatus).